A 250-amino-acid polypeptide reads, in one-letter code: Proteasome subunit alpha type-7-like (250 aa).

O-linked (GlcNAc) serine glycosylation occurs at serine 132.

Belongs to the peptidase T1A family. As to quaternary structure, the 26S proteasome consists of a 20S proteasome core and two 19S regulatory subunits. The 20S proteasome core is a barrel-shaped complex made of 28 subunits that are arranged in four stacked rings. The two outer rings are each formed by seven alpha subunits, and the two inner rings are formed by seven beta subunits. The proteolytic activity is exerted by three beta-subunits PSMB5, PSMB6 and PSMB7. PSMA7 interacts directly with the PSMG1-PSMG2 heterodimer which promotes 20S proteasome assembly. Interacts with HIF1A. Interacts with RAB7A. Interacts with PRKN. Interacts with ABL1 and ABL2. Interacts with EMAP2. Interacts with MAVS.

It is found in the cytoplasm. The protein localises to the nucleus. Its function is as follows. Component of the 20S core proteasome complex involved in the proteolytic degradation of most intracellular proteins. This complex plays numerous essential roles within the cell by associating with different regulatory particles. Associated with two 19S regulatory particles, forms the 26S proteasome and thus participates in the ATP-dependent degradation of ubiquitinated proteins. The 26S proteasome plays a key role in the maintenance of protein homeostasis by removing misfolded or damaged proteins that could impair cellular functions, and by removing proteins whose functions are no longer required. Associated with the PA200 or PA28, the 20S proteasome mediates ubiquitin-independent protein degradation. This type of proteolysis is required in several pathways including spermatogenesis (20S-PA200 complex) or generation of a subset of MHC class I-presented antigenic peptides (20S-PA28 complex). Inhibits the transactivation function of HIF-1A under both normoxic and hypoxia-mimicking conditions. The interaction with EMAP2 increases the proteasome-mediated HIF-1A degradation under the hypoxic conditions. Plays a role in hepatitis C virus internal ribosome entry site-mediated translation. Mediates nuclear translocation of the androgen receptor (AR) and thereby enhances androgen-mediated transactivation. Promotes MAVS degradation and thereby negatively regulates MAVS-mediated innate immune response. This chain is Proteasome subunit alpha type-7-like (PSMA7L), found in Macaca fascicularis (Crab-eating macaque).